Consider the following 259-residue polypeptide: GTP cyclohydrolase FolE2 (259 aa).

It belongs to the GTP cyclohydrolase IV family.

It carries out the reaction GTP + H2O = 7,8-dihydroneopterin 3'-triphosphate + formate + H(+). The protein operates within cofactor biosynthesis; 7,8-dihydroneopterin triphosphate biosynthesis; 7,8-dihydroneopterin triphosphate from GTP: step 1/1. In terms of biological role, converts GTP to 7,8-dihydroneopterin triphosphate. This Thermosipho africanus (strain TCF52B) protein is GTP cyclohydrolase FolE2.